The chain runs to 307 residues: UDP-3-O-acyl-N-acetylglucosamine deacetylase (307 aa).

Residues His79, His239, and Asp243 each contribute to the Zn(2+) site. Catalysis depends on His266, which acts as the Proton donor.

Belongs to the LpxC family. It depends on Zn(2+) as a cofactor.

It carries out the reaction a UDP-3-O-[(3R)-3-hydroxyacyl]-N-acetyl-alpha-D-glucosamine + H2O = a UDP-3-O-[(3R)-3-hydroxyacyl]-alpha-D-glucosamine + acetate. It participates in glycolipid biosynthesis; lipid IV(A) biosynthesis; lipid IV(A) from (3R)-3-hydroxytetradecanoyl-[acyl-carrier-protein] and UDP-N-acetyl-alpha-D-glucosamine: step 2/6. In terms of biological role, catalyzes the hydrolysis of UDP-3-O-myristoyl-N-acetylglucosamine to form UDP-3-O-myristoylglucosamine and acetate, the committed step in lipid A biosynthesis. The polypeptide is UDP-3-O-acyl-N-acetylglucosamine deacetylase (Tolumonas auensis (strain DSM 9187 / NBRC 110442 / TA 4)).